The primary structure comprises 345 residues: MKVAVLPGDGIGPEVTEAALKVLRALDEAEGLGLAYEVFPFGGAAIDAFGEPFPEPTRKGVEEAEAVLLGSVGGPKWDGLPRKISPETGLLSLRKSQDLFANLRPAKVFPGLERLSPLKEEIARGVDVLIVRELTGGIYFGEPRGMSEAEAWNTERYSKPEVERVARVAFEAARKRRKHVVSVDKANVLEVGEFWRKTVEEVGRGYPDVALEHQYVDAAAMHLVRSPARFDVVVTGNIFGDILSDLASVLPGSLGLLPSASLGRGTPVFEPVHGSAPDIAGKGIANPTAAILSAAMMLEHAFGLVELARKVEDAVAKALLETPPPDLGGSAGTEAFTATVLRHLA.

Residue 74 to 87 (GPKWDGLPRKISPE) participates in NAD(+) binding. Residues Arg-94, Arg-104, Arg-132, and Asp-217 each coordinate substrate. Mg(2+) contacts are provided by Asp-217, Asp-241, and Asp-245. NAD(+) is bound at residue 274–286 (GSAPDIAGKGIAN).

The protein belongs to the isocitrate and isopropylmalate dehydrogenases family. LeuB type 1 subfamily. In terms of assembly, homodimer. Mg(2+) serves as cofactor. It depends on Mn(2+) as a cofactor.

The protein resides in the cytoplasm. It catalyses the reaction (2R,3S)-3-isopropylmalate + NAD(+) = 4-methyl-2-oxopentanoate + CO2 + NADH. It functions in the pathway amino-acid biosynthesis; L-leucine biosynthesis; L-leucine from 3-methyl-2-oxobutanoate: step 3/4. In terms of biological role, catalyzes the oxidation of 3-carboxy-2-hydroxy-4-methylpentanoate (3-isopropylmalate) to 3-carboxy-4-methyl-2-oxopentanoate. The product decarboxylates to 4-methyl-2 oxopentanoate. The protein is 3-isopropylmalate dehydrogenase (leuB) of Thermus thermophilus.